The sequence spans 504 residues: L-carnitine/gamma-butyrobetaine antiporter (504 aa).

The next 12 helical transmembrane spans lie at Met10–Val30, Trp51–Phe71, Ile92–Ile112, Gly143–Val163, Phe195–Val215, Leu231–Leu251, Ser263–Met283, Trp316–Ala336, Leu347–Gly367, Trp398–Ala418, Leu446–Leu466, and Ala475–Ile495.

It belongs to the BCCT transporter (TC 2.A.15) family. CaiT subfamily. As to quaternary structure, homotrimer.

Its subcellular location is the cell inner membrane. It catalyses the reaction 4-(trimethylamino)butanoate(in) + (R)-carnitine(out) = 4-(trimethylamino)butanoate(out) + (R)-carnitine(in). Its pathway is amine and polyamine metabolism; carnitine metabolism. Functionally, catalyzes the exchange of L-carnitine for gamma-butyrobetaine. The chain is L-carnitine/gamma-butyrobetaine antiporter from Shigella dysenteriae serotype 1 (strain Sd197).